The sequence spans 360 residues: Serine/threonine-protein kinase SRK2H (360 aa).

The 257-residue stretch at 4 to 260 (YEVVKDLGAG…LKEIKKHPWY (257 aa)) folds into the Protein kinase domain. Residues 10 to 18 (LGAGNFGVA) and K33 contribute to the ATP site. The active-site Proton acceptor is the D123. The disordered stretch occupies residues 298 to 360 (EARNPAPSSN…AHSCQEPPKA (63 aa)). Acidic residues predominate over residues 313–343 (DDDEEDVEDEVEEEEEEEEEEEEEEEEEEDE). Positions 344 to 360 (YEKHVKEAHSCQEPPKA) are enriched in basic and acidic residues.

Belongs to the protein kinase superfamily. Ser/Thr protein kinase family. As to expression, expressed in seedlings.

The enzyme catalyses L-seryl-[protein] + ATP = O-phospho-L-seryl-[protein] + ADP + H(+). It catalyses the reaction L-threonyl-[protein] + ATP = O-phospho-L-threonyl-[protein] + ADP + H(+). The protein is Serine/threonine-protein kinase SRK2H (SRK2H) of Arabidopsis thaliana (Mouse-ear cress).